Consider the following 496-residue polypeptide: Gasdermin-E (496 aa).

Residues 1–56 (MFAKATRNFLREVDADGDLIAVSNLNDSDKLQLLSLVTKKKRFWCWQRPKYQFLSL) form a membrane targeting domain region. Position 45 is an S-(2-succinyl)cysteine (Cys-45). Residue Lys-120 forms a Glycyl lysine isopeptide (Lys-Gly) (interchain with G-Cter in ubiquitin) linkage. S-(2-succinyl)cysteine occurs at positions 156, 168, and 180. A Glycyl lysine isopeptide (Lys-Gly) (interchain with G-Cter in ubiquitin) cross-link involves residue Lys-189. Residues Cys-235, Cys-371, Cys-408, Cys-417, and Cys-489 each carry the S-(2-succinyl)cysteine modification.

The protein belongs to the gasdermin family. As to quaternary structure, homooligomer; homooligomeric ring-shaped pore complex containing 27-28 subunits when inserted in the membrane. Cleavage at Asp-270 by CASP3 (mature and uncleaved precursor forms) or granzyme B (GZMB) relieves autoinhibition and is sufficient to initiate pyroptosis. Post-translationally, succination by the Krebs cycle intermediate fumarate, which leads to S-(2-succinyl)cysteine residues, inhibits processing by caspases, and ability to initiate pyroptosis. Succination modification is catalyzed by a non-enzymatic reaction caused by an accumulation of fumarate. In terms of processing, ubiquitinated at Lys-120 and Lys-189 via 'Lys-48'-linked polyubiquitin chains, leading to proteasomal degradation. Deubiquitinated by USP48, leading to increased stability. Palmitoylated. In terms of tissue distribution, expressed in cochlea. Low level of expression in heart, brain, placenta, lung, liver, skeletal muscle, kidney and pancreas, with highest expression in placenta.

It is found in the cell membrane. It localises to the cytoplasm. The protein resides in the cytosol. Its activity is regulated as follows. The full-length protein before cleavage is inactive: intramolecular interactions between N- and C-terminal domains mediate autoinhibition in the absence of activation signal. The intrinsic pyroptosis-inducing activity is carried by the released N-terminal moiety (Gasdermin-E, N-terminal) following cleavage by CASP3 or granzyme B (GZMB). Activated by NLRP1 in the absence of GSDMD expression: NLRP1 cleaves and activates CASP8, promoting downstream activation of CASP3 and subsequent activation of GSDME. (Microbial infection) Activated upon human coronavirus SARS-CoV-2 infection, leading to lung epithelial cell death. Activation takes place in response to (1) activation of NLRP1 and (2) inactivation of GSDMD following NLRP1 and GSDMD cleavage by the SARS-CoV-2 3C-like proteinase nsp5. In terms of biological role, precursor of a pore-forming protein that converts non-inflammatory apoptosis to pyroptosis. This form constitutes the precursor of the pore-forming protein: upon cleavage, the released N-terminal moiety (Gasdermin-E, N-terminal) binds to membranes and forms pores, triggering pyroptosis. Functionally, pore-forming protein produced by cleavage by CASP3 or granzyme B (GZMB), which converts non-inflammatory apoptosis to pyroptosis or promotes granzyme-mediated pyroptosis, respectively. After cleavage, moves to the plasma membrane, homooligomerizes within the membrane and forms pores of 10-15 nanometers (nm) of inner diameter, allowing the release of mature interleukins (IL1B and IL16) and triggering pyroptosis. Binds to inner leaflet lipids, bisphosphorylated phosphatidylinositols, such as phosphatidylinositol (4,5)-bisphosphate. Cleavage by CASP3 switches CASP3-mediated apoptosis induced by TNF or danger signals, such as chemotherapy drugs, to pyroptosis. Mediates secondary necrosis downstream of the mitochondrial apoptotic pathway and CASP3 activation as well as in response to viral agents. Exhibits bactericidal activity. Cleavage by GZMB promotes tumor suppressor activity by triggering robust anti-tumor immunity. Suppresses tumors by mediating granzyme-mediated pyroptosis in target cells of natural killer (NK) cells: cleavage by granzyme B (GZMB), delivered to target cells from NK-cells, triggers pyroptosis of tumor cells and tumor suppression. May play a role in the p53/TP53-regulated cellular response to DNA damage. (Microbial infection) Pore-forming protein, which promotes maternal placental pyroptosis in response to Zika virus infection, contributing to adverse fetal outcomes. The polypeptide is Gasdermin-E (Homo sapiens (Human)).